Here is a 294-residue protein sequence, read N- to C-terminus: Ribosomal RNA small subunit methyltransferase A (294 aa).

6 residues coordinate S-adenosyl-L-methionine: Asn31, Leu33, Gly58, Glu79, Asp104, and Asn129.

This sequence belongs to the class I-like SAM-binding methyltransferase superfamily. rRNA adenine N(6)-methyltransferase family. RsmA subfamily.

The protein resides in the cytoplasm. It carries out the reaction adenosine(1518)/adenosine(1519) in 16S rRNA + 4 S-adenosyl-L-methionine = N(6)-dimethyladenosine(1518)/N(6)-dimethyladenosine(1519) in 16S rRNA + 4 S-adenosyl-L-homocysteine + 4 H(+). In terms of biological role, specifically dimethylates two adjacent adenosines (A1518 and A1519) in the loop of a conserved hairpin near the 3'-end of 16S rRNA in the 30S particle. May play a critical role in biogenesis of 30S subunits. This Oceanobacillus iheyensis (strain DSM 14371 / CIP 107618 / JCM 11309 / KCTC 3954 / HTE831) protein is Ribosomal RNA small subunit methyltransferase A.